A 216-amino-acid polypeptide reads, in one-letter code: Octanoyltransferase (216 aa).

Positions 30–216 (GEAGEAVWLL…KRQFFEVFGA (187 aa)) constitute a BPL/LPL catalytic domain. Substrate-binding positions include 69 to 76 (RGGQYTYH), 149 to 151 (AIG), and 162 to 164 (GLS). Cys180 acts as the Acyl-thioester intermediate in catalysis.

The protein belongs to the LipB family.

It localises to the cytoplasm. The enzyme catalyses octanoyl-[ACP] + L-lysyl-[protein] = N(6)-octanoyl-L-lysyl-[protein] + holo-[ACP] + H(+). Its pathway is protein modification; protein lipoylation via endogenous pathway; protein N(6)-(lipoyl)lysine from octanoyl-[acyl-carrier-protein]: step 1/2. In terms of biological role, catalyzes the transfer of endogenously produced octanoic acid from octanoyl-acyl-carrier-protein onto the lipoyl domains of lipoate-dependent enzymes. Lipoyl-ACP can also act as a substrate although octanoyl-ACP is likely to be the physiological substrate. The chain is Octanoyltransferase from Jannaschia sp. (strain CCS1).